The primary structure comprises 275 residues: Large ribosomal subunit protein uL2 (275 aa).

Basic and acidic residues predominate over residues 28 to 38 (EPYAPLLDKKS). Disordered stretches follow at residues 28-55 (EPYA…RHVG) and 224-258 (AMNP…GYKT).

This sequence belongs to the universal ribosomal protein uL2 family. As to quaternary structure, part of the 50S ribosomal subunit. Forms a bridge to the 30S subunit in the 70S ribosome.

One of the primary rRNA binding proteins. Required for association of the 30S and 50S subunits to form the 70S ribosome, for tRNA binding and peptide bond formation. It has been suggested to have peptidyltransferase activity; this is somewhat controversial. Makes several contacts with the 16S rRNA in the 70S ribosome. In Cellvibrio japonicus (strain Ueda107) (Pseudomonas fluorescens subsp. cellulosa), this protein is Large ribosomal subunit protein uL2.